We begin with the raw amino-acid sequence, 109 residues long: Small ribosomal subunit protein uS10 (109 aa).

The protein belongs to the universal ribosomal protein uS10 family. As to quaternary structure, part of the 30S ribosomal subunit.

Involved in the binding of tRNA to the ribosomes. The protein is Small ribosomal subunit protein uS10 of Wolbachia pipientis wMel.